Reading from the N-terminus, the 178-residue chain is SPbeta prophage-derived uncharacterized protein YonC (178 aa).

The polypeptide is SPbeta prophage-derived uncharacterized protein YonC (yonC) (Bacillus subtilis (strain 168)).